The primary structure comprises 356 residues: Serpentine receptor class epsilon-29 (356 aa).

7 helical membrane passes run 29 to 49 (IVELFSYLICAYILTLNIYII), 61 to 81 (ILAIPLFGIWFELIIGKLITI), 119 to 139 (LLIFGGFLQWHYMFTIIFGVL), 161 to 181 (LFIPLFLTVISQFLSISTSLA), 190 to 210 (FLAQLPWIICCPFSAMAYFFV), 251 to 271 (LVFVVLSCIALCGIGITALFY), and 281 to 301 (FVENFLFLHPYLSCLTAIFSV).

Belongs to the nematode receptor-like protein sre family.

The protein localises to the membrane. The sequence is that of Serpentine receptor class epsilon-29 (sre-29) from Caenorhabditis elegans.